The primary structure comprises 773 residues: MKFNRLMALLFGVSSPLYALDQTAVNWLGQNLDVKYTLLDTKPTTCPKAQQKCYYSELSFSVRKENTKANNDFAIFFSQLMPIYHVEGDNFAITHINGDIHKITPAAGFSGFSSAPTTVRFYTKDSQVTRSEVYAKLCCERTRSLKLTPQVIKSTQTQRDNDTGLDCNLNLTPFVTLNQLQTSSKDDTPWMGSEYLYQHQVKPTLDAAIGLIPKPKQLTVLSDKRLNLAAGINLQLSGISADAIAMAQQRLNTLGVKSTKEGLVVNVAVKPNKQSSPHYQLTVAENNISIQGNNSAAAFYALQSLAGLLDINDLRIPMVDIIDTPRYDFRGLHVDVARNFRSKAFILQTIEQMAAYKLNKLHLHLADDEGWRLAIDGLDELTSVGAYRCFDLTETRCLLPQLGAGNDKNAQVNGFYSAEDYIEILRYAKAHHIEVLPSLDMPGHSRAAIIAMEARYKKLMAQGKPEDAQKYRLVETADKTRYSSIQHYNDNTLNVCIANTYTFIDKVLSEVKVLHDRAGVPLNTYHIGADETAVLWLESPACKKLQASVKDFTNFNGYFIERVAKLLDKKGIQVAGWSDGLGDVRAANMPANIQSNGLGDIKRKRAPVAHRFANQGWQVVLSSPDVTYFDFPYQSHPEERGNHWASRAIESKKMFEFMPDNLPAHAEIWKNTNNHAYIANDSDSSLNKGVQFAGLQGHLWSEMLRSDAQAEYMLYPRLLALAERAWHHAEWELPYQAGRIYSQSSGYFTAKLQAQREADWQRFVAILGNSRTT.

An N-terminal signal peptide occupies residues 1-19; that stretch reads MKFNRLMALLFGVSSPLYA. 3 cysteine pairs are disulfide-bonded: cysteine 46/cysteine 53, cysteine 389/cysteine 397, and cysteine 496/cysteine 542. The active-site Proton donor is the glutamate 531.

This sequence belongs to the glycosyl hydrolase 20 family.

It catalyses the reaction Hydrolysis of terminal non-reducing N-acetyl-D-hexosamine residues in N-acetyl-beta-D-hexosaminides.. The sequence is that of Beta-hexosaminidase B (nag096) from Pseudoalteromonas piscicida.